The primary structure comprises 240 residues: CRISPR-associated protein Cas5 3 (240 aa).

It belongs to the CRISPR-associated protein Cas5 family. Subtype I-A/Apern subfamily. Part of the aCascade ribonucleoprotein complex.

Functionally, CRISPR (clustered regularly interspaced short palindromic repeat) is an adaptive immune system that provides protection against mobile genetic elements (viruses, transposable elements and conjugative plasmids). CRISPR clusters contain spacers, sequences complementary to antecedent mobile elements, and target invading nucleic acids. CRISPR clusters are transcribed and processed into CRISPR RNA (crRNA). This Saccharolobus solfataricus (strain ATCC 35092 / DSM 1617 / JCM 11322 / P2) (Sulfolobus solfataricus) protein is CRISPR-associated protein Cas5 3 (cas5c).